A 360-amino-acid polypeptide reads, in one-letter code: uncharacterized protein (360 aa).

Solcar repeat units lie at residues 34 to 153 (VGVL…LSVW), 172 to 256 (PDWS…FKTN), and 266 to 355 (NPFV…FKFL). 6 helical membrane passes run 40–60 (VSAS…LDVV), 125–145 (LWSG…FYFT), 178–198 (AVAG…IEMI), 225–247 (ISSF…GIYW), 269–289 (VVSF…THPF), and 327–348 (FSSG…MISF).

This sequence belongs to the mitochondrial carrier (TC 2.A.29) family.

The protein resides in the mitochondrion inner membrane. This is an uncharacterized protein from Caenorhabditis elegans.